A 329-amino-acid polypeptide reads, in one-letter code: GMP reductase (329 aa).

Cys-178 serves as the catalytic Thioimidate intermediate. 207 to 230 provides a ligand contact to NADP(+); the sequence is VIADGGIRTHGDVAKSIRMGATMV.

Belongs to the IMPDH/GMPR family. GuaC type 2 subfamily.

It catalyses the reaction IMP + NH4(+) + NADP(+) = GMP + NADPH + 2 H(+). Catalyzes the irreversible NADPH-dependent deamination of GMP to IMP. It functions in the conversion of nucleobase, nucleoside and nucleotide derivatives of G to A nucleotides, and in maintaining the intracellular balance of A and G nucleotides. The chain is GMP reductase from Lactococcus lactis subsp. cremoris (strain MG1363).